A 519-amino-acid chain; its full sequence is Probable anion transporter 3, chloroplastic (519 aa).

A chloroplast-targeting transit peptide spans 1 to 76; the sequence is MAPPGQLLPL…PPPPATSLPG (76 aa). Over residues 56-72 the composition is skewed to pro residues; it reads LPFAPPRRLSRPPPPAT. The disordered stretch occupies residues 56 to 82; it reads LPFAPPRRLSRPPPPATSLPGASPGGG. Helical transmembrane passes span 100-120, 138-158, 166-186, 188-208, 229-249, 253-273, 326-346, 362-382, 403-423, 424-444, 460-480, and 488-508; these read VAAM…VMSV, VVQS…GALV, VMAY…WAAA, SLWL…VALP, IAMA…PIIM, GIFG…LVWI, WALI…LSWM, AWFS…AGVV, IGFV…SPVI, ASAW…GFLV, MSNT…GFFV, and GFLI…DIFA.

The protein belongs to the major facilitator superfamily. Sodium/anion cotransporter (TC 2.A.1.14) family.

The protein resides in the plastid. Its subcellular location is the chloroplast membrane. Functionally, probable anion transporter. The polypeptide is Probable anion transporter 3, chloroplastic (PHT4;3) (Oryza sativa subsp. japonica (Rice)).